The primary structure comprises 357 residues: Snake venom metalloproteinase H4 (357 aa).

The signal sequence occupies residues 1-6; sequence FPYQGS. Residues 7 to 176 constitute a propeptide that is removed on maturation; that stretch reads SIMLESGKVN…KKASQLIVST (170 aa). Positions 180–357 constitute a Peptidase M12B domain; sequence RYMEIVIVVD…EVIKYFLDSK (178 aa). H316 contacts Zn(2+). E317 is an active-site residue. Zn(2+) contacts are provided by H320 and H326. C333 and C339 are oxidised to a cystine.

This sequence belongs to the venom metalloproteinase (M12B) family. P-I subfamily. As to quaternary structure, monomer. Zn(2+) serves as cofactor. In terms of tissue distribution, expressed by the venom gland.

It localises to the secreted. Its function is as follows. Snake venom metalloproteinase that impairs hemostasis in the envenomed animal. This Deinagkistrodon acutus (Hundred-pace snake) protein is Snake venom metalloproteinase H4.